A 333-amino-acid chain; its full sequence is Glyceraldehyde-3-phosphate dehydrogenase (333 aa).

NAD(+) is bound by residues 11–12 (RI), D35, and T121. D-glyceraldehyde 3-phosphate contacts are provided by residues 151 to 153 (SCT) and T182. Catalysis depends on C152, which acts as the Nucleophile. Residue N183 participates in NAD(+) binding. Residues R197, 210 to 211 (TG), and R233 each bind D-glyceraldehyde 3-phosphate. Residue N315 participates in NAD(+) binding.

Belongs to the glyceraldehyde-3-phosphate dehydrogenase family. As to quaternary structure, homotetramer.

The protein resides in the cytoplasm. It catalyses the reaction D-glyceraldehyde 3-phosphate + phosphate + NAD(+) = (2R)-3-phospho-glyceroyl phosphate + NADH + H(+). It participates in carbohydrate degradation; glycolysis; pyruvate from D-glyceraldehyde 3-phosphate: step 1/5. Its function is as follows. Catalyzes the oxidative phosphorylation of glyceraldehyde 3-phosphate (G3P) to 1,3-bisphosphoglycerate (BPG) using the cofactor NAD. The first reaction step involves the formation of a hemiacetal intermediate between G3P and a cysteine residue, and this hemiacetal intermediate is then oxidized to a thioester, with concomitant reduction of NAD to NADH. The reduced NADH is then exchanged with the second NAD, and the thioester is attacked by a nucleophilic inorganic phosphate to produce BPG. In Thermotoga maritima (strain ATCC 43589 / DSM 3109 / JCM 10099 / NBRC 100826 / MSB8), this protein is Glyceraldehyde-3-phosphate dehydrogenase (gap).